Reading from the N-terminus, the 503-residue chain is Glutamate/gamma-aminobutyrate antiporter (503 aa).

33–43 contributes to the L-glutamate binding site; that stretch reads LHLVFFLLLGG. Helical transmembrane passes span 35–55, 153–173, 194–214, 232–252, 366–386, 407–427, and 440–460; these read LVFFLLLGGLLWFLPVALCAA, FVVGIVIPSVILFGLAAAYFI, VSTLVVFVSFILAYMGVEASA, ILLVILAISLDAIGGFSVAAV, LTVVIYLVGYLLFFIVYFVLI, IIAGIGFLLSIFALFISFVPP, and MILLISFVVTAILPFIIYELH.

This sequence belongs to the amino acid-polyamine-organocation (APC) superfamily. Glutamate:GABA antiporter (GGA) (TC 2.A.3.7) family.

The protein resides in the cell membrane. The catalysed reaction is 4-aminobutanoate(in) + L-glutamate(out) = 4-aminobutanoate(out) + L-glutamate(in). In terms of biological role, involved in glutaminase-dependent acid resistance. Exchanges extracellular glutamate (Glu) for intracellular gamma-aminobutyric acid (GABA) under acidic conditions. The protein is Glutamate/gamma-aminobutyrate antiporter of Lactococcus lactis subsp. cremoris (strain MG1363).